Reading from the N-terminus, the 464-residue chain is Juvenile hormone epoxide hydrolase 1 (464 aa).

Residues 7-27 (MLIFAAIAGIAVLYYQITKEL) form a helical membrane-spanning segment. Residue aspartate 224 is the Nucleophile of the active site. The Proton donor role is filled by tyrosine 370. The active-site Proton acceptor is histidine 427.

It belongs to the peptidase S33 family. In terms of tissue distribution, developing oocytes, fat body and midgut epithelium of adults.

It is found in the microsome membrane. The protein localises to the endoplasmic reticulum membrane. It carries out the reaction cis-stilbene oxide + H2O = (1R,2R)-hydrobenzoin. It catalyses the reaction 1-(4-methoxyphenyl)-N-methyl-N-[(3-methyloxetan-3-yl)methyl]methanamine + H2O = 2-{[(4-methoxybenzyl)(methyl)amino]methyl}-2-methylpropane-1,3-diol. Functionally, catalyzes juvenile hormone hydrolysis. The protein is Juvenile hormone epoxide hydrolase 1 of Ctenocephalides felis (Cat flea).